The chain runs to 214 residues: Outer membrane lipoprotein MapA (214 aa).

The N-terminal stretch at 1 to 17 (MFKKFLIFIVPILFLSA) is a signal peptide. Residue C18 is the site of N-palmitoyl cysteine attachment. C18 carries the S-diacylglycerol cysteine lipid modification.

It localises to the cell outer membrane. This Campylobacter jejuni subsp. jejuni serotype O:6 (strain 81116 / NCTC 11828) protein is Outer membrane lipoprotein MapA (mapA).